Reading from the N-terminus, the 68-residue chain is uncharacterized protein (68 aa).

A signal peptide spans 1-28; that stretch reads MNKEQSADDPSVDLIRVKNMLNSTISMS.

This is an uncharacterized protein from Escherichia coli (strain K12).